A 575-amino-acid polypeptide reads, in one-letter code: Proline--tRNA ligase (575 aa).

The protein belongs to the class-II aminoacyl-tRNA synthetase family. ProS type 1 subfamily. In terms of assembly, homodimer.

Its subcellular location is the cytoplasm. It catalyses the reaction tRNA(Pro) + L-proline + ATP = L-prolyl-tRNA(Pro) + AMP + diphosphate. Functionally, catalyzes the attachment of proline to tRNA(Pro) in a two-step reaction: proline is first activated by ATP to form Pro-AMP and then transferred to the acceptor end of tRNA(Pro). As ProRS can inadvertently accommodate and process non-cognate amino acids such as alanine and cysteine, to avoid such errors it has two additional distinct editing activities against alanine. One activity is designated as 'pretransfer' editing and involves the tRNA(Pro)-independent hydrolysis of activated Ala-AMP. The other activity is designated 'posttransfer' editing and involves deacylation of mischarged Ala-tRNA(Pro). The misacylated Cys-tRNA(Pro) is not edited by ProRS. This is Proline--tRNA ligase from Heliobacterium modesticaldum (strain ATCC 51547 / Ice1).